A 371-amino-acid polypeptide reads, in one-letter code: uncharacterized protein (371 aa).

It belongs to the glycerate kinase type-1 family.

This is an uncharacterized protein from Synechocystis sp. (strain ATCC 27184 / PCC 6803 / Kazusa).